The sequence spans 580 residues: MALQLLTPSFSFQHSPSPHKLTTLRYTHHRIRCTASAPSYSDLVRRRSANYKPSKWDSNFVETLESDYKKENHEMYIEKLMGDVKHLMKEVVNPIEKMELVDTIQRLGLGYLFNKEIKEVLNTITTSKATLKTKKDLHAVALQFRLLRQHGYEVSPDAFHEFKDEKGGFKESLCMDIKGMLCLYEASHLSFQGEVVLDEAREFTSTHLKAIGGNIDPVLLKKVRHSLEMPLHWRMLRLEARWYIETYDEEDRKNPSLAELAKHDFNSVQTIYQRSLKRMSRWWRDLGLGERLEFSRDRLVECFFWTTGVIFDPQFERCRGVLTKVNQLVSTIDDVYDVYGSLEELELFTDAVDRWDIRAMEQLPEYMKICYLALYNTTNDIAYEALKEEGLDVIPYLKKVWTDLCKSYIVEARWYSNGYKPTLEEYLENAWTSIAGPVALVHAYFSFGQKMPFEALNYSNTSSLIKWSSMIFRLCDDLATSSDEVARGDVPKSIQCYMYEAGVSESVARDHIKYLIDEAWKKMNECLVYNTPFLQPLINAGLNLARMAHCMYERGDGHGFSNELDKKRVLLLLAEPFKFM.

The N-terminal 32 residues, 1–32, are a transit peptide targeting the chloroplast; the sequence is MALQLLTPSFSFQHSPSPHKLTTLRYTHHRIR. (2E)-geranyl diphosphate contacts are provided by arginine 296, aspartate 333, aspartate 337, arginine 473, and aspartate 476. The Mg(2+) site is built by aspartate 333 and aspartate 337. Positions 333–337 match the DDXXD motif motif; that stretch reads DDVYD. Aspartate 476, threonine 480, and glutamate 484 together coordinate Mg(2+).

The protein belongs to the terpene synthase family. Tpsb subfamily. In terms of assembly, monomer. Requires Mg(2+) as cofactor. It depends on Mn(2+) as a cofactor. Expressed in developing and mature fruits. Barely detectable in leaves and shoots.

The protein localises to the plastid. It localises to the chloroplast. It catalyses the reaction (2E)-geranyl diphosphate = alpha-thujene + diphosphate. It functions in the pathway secondary metabolite biosynthesis; terpenoid biosynthesis. Functionally, monoterpene synthase (TPS) involved in the biosynthesis of monoterpene natural products used by traditional Chinese medicine to treat headache, inflammation and intoxication. Catalyzes the conversion of (2E)-geranyl diphosphate (GPP) into alpha-thujene. This chain is Alpha-thujene synthase, chloroplastic, found in Litsea cubeba (Aromatic litsea).